A 515-amino-acid chain; its full sequence is Glucose-6-phosphate 1-dehydrogenase X (515 aa).

Residue A2 is modified to N-acetylalanine. NADP(+) is bound by residues G38–K45, R72, Y147, and K171. D-glucose 6-phosphate contacts are provided by residues K171, H201–K205, E239, and D258. H263 functions as the Proton acceptor in the catalytic mechanism. An NADP(+)-binding site is contributed by R357. D-glucose 6-phosphate contacts are provided by K360 and R365. The NADP(+) site is built by K366, R370, and R393. Q395 contributes to the D-glucose 6-phosphate binding site. Residues Y401–K403, D421–T423, R487, and Y503 each bind NADP(+). Y507 carries the post-translational modification Phosphotyrosine. NADP(+) is bound at residue W509.

The protein belongs to the glucose-6-phosphate dehydrogenase family. Homotetramer; dimer of dimers. Interacts with SIRT2; the interaction is enhanced by H(2)O(2) treatment. Forms a ternary complex with ALDOB and TP53; this interaction is direct. ALDOB stabilizes the complex inhibiting G6PD activity and keeping oxidative pentose phosphate metabolism in check. In terms of processing, acetylated by ELP3 at Lys-403; acetylation inhibits its homodimerization and enzyme activity. Deacetylated by SIRT2 at Lys-403; deacetylation stimulates its enzyme activity.

The protein localises to the cytoplasm. The protein resides in the cytosol. It is found in the membrane. It carries out the reaction D-glucose 6-phosphate + NADP(+) = 6-phospho-D-glucono-1,5-lactone + NADPH + H(+). It functions in the pathway carbohydrate degradation; pentose phosphate pathway; D-ribulose 5-phosphate from D-glucose 6-phosphate (oxidative stage): step 1/3. Its function is as follows. Catalyzes the rate-limiting step of the oxidative pentose-phosphate pathway, which represents a route for the dissimilation of carbohydrates besides glycolysis. The main function of this enzyme is to provide reducing power (NADPH) and pentose phosphates for fatty acid and nucleic acid synthesis. This chain is Glucose-6-phosphate 1-dehydrogenase X (G6pdx), found in Mus musculus (Mouse).